A 159-amino-acid chain; its full sequence is Ribosome maturation factor RimP (159 aa).

The protein belongs to the RimP family.

Its subcellular location is the cytoplasm. Its function is as follows. Required for maturation of 30S ribosomal subunits. The polypeptide is Ribosome maturation factor RimP (Streptococcus pneumoniae serotype 2 (strain D39 / NCTC 7466)).